Consider the following 338-residue polypeptide: Ketol-acid reductoisomerase (NADP(+)) (338 aa).

In terms of domain architecture, KARI N-terminal Rossmann spans Met-1–Thr-181. NADP(+) is bound by residues Phe-24–Gln-27, Lys-47, Ser-50, Ser-52, and Asp-82–Gln-85. The active site involves His-107. Gly-133 contributes to the NADP(+) binding site. In terms of domain architecture, KARI C-terminal knotted spans Asn-182–Leu-327. The Mg(2+) site is built by Asp-190, Glu-194, Glu-226, and Glu-230. Ser-251 is a binding site for substrate.

This sequence belongs to the ketol-acid reductoisomerase family. The cofactor is Mg(2+).

It catalyses the reaction (2R)-2,3-dihydroxy-3-methylbutanoate + NADP(+) = (2S)-2-acetolactate + NADPH + H(+). The enzyme catalyses (2R,3R)-2,3-dihydroxy-3-methylpentanoate + NADP(+) = (S)-2-ethyl-2-hydroxy-3-oxobutanoate + NADPH + H(+). The protein operates within amino-acid biosynthesis; L-isoleucine biosynthesis; L-isoleucine from 2-oxobutanoate: step 2/4. Its pathway is amino-acid biosynthesis; L-valine biosynthesis; L-valine from pyruvate: step 2/4. Its function is as follows. Involved in the biosynthesis of branched-chain amino acids (BCAA). Catalyzes an alkyl-migration followed by a ketol-acid reduction of (S)-2-acetolactate (S2AL) to yield (R)-2,3-dihydroxy-isovalerate. In the isomerase reaction, S2AL is rearranged via a Mg-dependent methyl migration to produce 3-hydroxy-3-methyl-2-ketobutyrate (HMKB). In the reductase reaction, this 2-ketoacid undergoes a metal-dependent reduction by NADPH to yield (R)-2,3-dihydroxy-isovalerate. The polypeptide is Ketol-acid reductoisomerase (NADP(+)) (Chloroherpeton thalassium (strain ATCC 35110 / GB-78)).